Here is a 282-residue protein sequence, read N- to C-terminus: tRNA pseudouridine synthase B (282 aa).

Asp36 functions as the Nucleophile in the catalytic mechanism.

Belongs to the pseudouridine synthase TruB family. Type 1 subfamily.

The enzyme catalyses uridine(55) in tRNA = pseudouridine(55) in tRNA. Functionally, responsible for synthesis of pseudouridine from uracil-55 in the psi GC loop of transfer RNAs. The polypeptide is tRNA pseudouridine synthase B (Mycoplasmopsis pulmonis (strain UAB CTIP) (Mycoplasma pulmonis)).